The chain runs to 480 residues: ATP synthase subunit beta (480 aa).

Residue 153–160 (GGAGVGKT) participates in ATP binding.

It belongs to the ATPase alpha/beta chains family. F-type ATPases have 2 components, CF(1) - the catalytic core - and CF(0) - the membrane proton channel. CF(1) has five subunits: alpha(3), beta(3), gamma(1), delta(1), epsilon(1). CF(0) has three main subunits: a(1), b(2) and c(9-12). The alpha and beta chains form an alternating ring which encloses part of the gamma chain. CF(1) is attached to CF(0) by a central stalk formed by the gamma and epsilon chains, while a peripheral stalk is formed by the delta and b chains.

It is found in the cell membrane. The enzyme catalyses ATP + H2O + 4 H(+)(in) = ADP + phosphate + 5 H(+)(out). Functionally, produces ATP from ADP in the presence of a proton gradient across the membrane. The catalytic sites are hosted primarily by the beta subunits. The polypeptide is ATP synthase subunit beta (Lactobacillus gasseri (strain ATCC 33323 / DSM 20243 / BCRC 14619 / CIP 102991 / JCM 1131 / KCTC 3163 / NCIMB 11718 / NCTC 13722 / AM63)).